Consider the following 90-residue polypeptide: UPF0213 protein lin0209 (90 aa).

Positions 5 to 80 (NEHFFYVLKC…KKLSRKNKDS (76 aa)) constitute a GIY-YIG domain.

The protein belongs to the UPF0213 family.

The chain is UPF0213 protein lin0209 from Listeria innocua serovar 6a (strain ATCC BAA-680 / CLIP 11262).